Consider the following 784-residue polypeptide: Homeobox-leucine zipper protein ROC2 (784 aa).

The disordered stretch occupies residues 60–113 (AESGDNMIRSRASDPLGGDEFESKSGSENVDGVSVDDQDPNQRPRKKRYHRHTQ). The span at 102–113 (RPRKKRYHRHTQ) shows a compositional bias: basic residues. The homeobox DNA-binding region spans 104 to 163 (RKKRYHRHTQHQIQEMEAFFKECPHPDDKQRKELSRELGLEPLQVKFWFQNKRTQMKNQH). A coiled-coil region spans residues 158 to 234 (QMKNQHERHE…DRISAIAAKY (77 aa)). Positions 286–523 (SEVDKPMIVE…LDRQCERLAS (238 aa)) constitute an START domain.

This sequence belongs to the HD-ZIP homeobox family. Class IV subfamily.

The protein localises to the nucleus. Functionally, probable transcription factor. The polypeptide is Homeobox-leucine zipper protein ROC2 (ROC2) (Oryza sativa subsp. japonica (Rice)).